We begin with the raw amino-acid sequence, 59 residues long: Large ribosomal subunit protein bL32 (59 aa).

The segment at 1-59 is disordered; sequence MAVQQNKKSPSKRGMHRAHDFLTTPPLAVESTTGEAHLRHHISPAGFYRGKKVTKGKGE. Residues 49-59 show a composition bias toward basic residues; it reads RGKKVTKGKGE.

The protein belongs to the bacterial ribosomal protein bL32 family.

In Dechloromonas aromatica (strain RCB), this protein is Large ribosomal subunit protein bL32.